A 525-amino-acid polypeptide reads, in one-letter code: GMP synthase [glutamine-hydrolyzing] (525 aa).

Residues arginine 9–leucine 207 enclose the Glutamine amidotransferase type-1 domain. Residue cysteine 86 is the Nucleophile of the active site. Catalysis depends on residues histidine 181 and glutamate 183. One can recognise a GMPS ATP-PPase domain in the interval tryptophan 208–arginine 400. Residue serine 235–serine 241 coordinates ATP.

Homodimer.

It carries out the reaction XMP + L-glutamine + ATP + H2O = GMP + L-glutamate + AMP + diphosphate + 2 H(+). Its pathway is purine metabolism; GMP biosynthesis; GMP from XMP (L-Gln route): step 1/1. Its function is as follows. Catalyzes the synthesis of GMP from XMP. The chain is GMP synthase [glutamine-hydrolyzing] from Klebsiella pneumoniae subsp. pneumoniae (strain ATCC 700721 / MGH 78578).